The chain runs to 241 residues: U2 small nuclear ribonucleoprotein B'' (241 aa).

In terms of domain architecture, RRM 1 spans 12-91 (QTLYVNNLYE…RPMKIQYCKS (80 aa)). Positions 99–126 (LDGTYMEKKREREENDKKGSNKKQDRKS) are enriched in basic and acidic residues. Positions 99–169 (LDGTYMEKKR…PRDDPPNKTL (71 aa)) are disordered. Low complexity predominate over residues 129-152 (QQQQQQKRPGAPTSTTSTTSPTTS). The RRM 2 domain occupies 167-241 (KTLFVENLPD…KPMVVSFAAQ (75 aa)).

The protein belongs to the RRM U1 A/B'' family. As to quaternary structure, identified in the spliceosome B complex. Identified in the spliceosome C complex.

It is found in the nucleus. In terms of biological role, involved in pre-mRNA splicing as component of the spliceosome. Associated with sn-RNP U2, where it contributes to the binding of stem loop IV of U2 snRNA. This is U2 small nuclear ribonucleoprotein B'' (snrpb2) from Dictyostelium discoideum (Social amoeba).